A 458-amino-acid polypeptide reads, in one-letter code: Bifunctional protein GlmU (458 aa).

The interval methionine 1–arginine 231 is pyrophosphorylase. UDP-N-acetyl-alpha-D-glucosamine is bound by residues leucine 11–glycine 14, lysine 25, glutamine 78, glycine 83–threonine 84, tyrosine 105–aspartate 107, glycine 142, glutamate 156, asparagine 171, and asparagine 229. Residue aspartate 107 participates in Mg(2+) binding. Position 229 (asparagine 229) interacts with Mg(2+). Residues leucine 232–alanine 252 are linker. Residues glycine 253–lysine 458 form an N-acetyltransferase region. Residues arginine 335 and lysine 353 each coordinate UDP-N-acetyl-alpha-D-glucosamine. The active-site Proton acceptor is the histidine 365. Tyrosine 368 and asparagine 379 together coordinate UDP-N-acetyl-alpha-D-glucosamine. Residues alanine 382, asparagine 388 to tyrosine 389, serine 407, alanine 425, and arginine 442 contribute to the acetyl-CoA site.

In the N-terminal section; belongs to the N-acetylglucosamine-1-phosphate uridyltransferase family. It in the C-terminal section; belongs to the transferase hexapeptide repeat family. In terms of assembly, homotrimer. Mg(2+) is required as a cofactor.

It localises to the cytoplasm. The enzyme catalyses alpha-D-glucosamine 1-phosphate + acetyl-CoA = N-acetyl-alpha-D-glucosamine 1-phosphate + CoA + H(+). It catalyses the reaction N-acetyl-alpha-D-glucosamine 1-phosphate + UTP + H(+) = UDP-N-acetyl-alpha-D-glucosamine + diphosphate. The protein operates within nucleotide-sugar biosynthesis; UDP-N-acetyl-alpha-D-glucosamine biosynthesis; N-acetyl-alpha-D-glucosamine 1-phosphate from alpha-D-glucosamine 6-phosphate (route II): step 2/2. Its pathway is nucleotide-sugar biosynthesis; UDP-N-acetyl-alpha-D-glucosamine biosynthesis; UDP-N-acetyl-alpha-D-glucosamine from N-acetyl-alpha-D-glucosamine 1-phosphate: step 1/1. It participates in bacterial outer membrane biogenesis; LPS lipid A biosynthesis. Its function is as follows. Catalyzes the last two sequential reactions in the de novo biosynthetic pathway for UDP-N-acetylglucosamine (UDP-GlcNAc). The C-terminal domain catalyzes the transfer of acetyl group from acetyl coenzyme A to glucosamine-1-phosphate (GlcN-1-P) to produce N-acetylglucosamine-1-phosphate (GlcNAc-1-P), which is converted into UDP-GlcNAc by the transfer of uridine 5-monophosphate (from uridine 5-triphosphate), a reaction catalyzed by the N-terminal domain. This is Bifunctional protein GlmU from Sodalis glossinidius (strain morsitans).